Reading from the N-terminus, the 456-residue chain is Putative F-box/FBD/LRR-repeat protein At1g66300 (456 aa).

Residues 1–23 (MDEDGEKRVRTKRLCSPESSDKK) form a disordered region. The 47-residue stretch at 28–74 (VDWVRDLPESLICHVLLNLSTKDVIKNCVLSTKWRYLWRYVPGLDLD) folds into the F-box domain. 4 LRR repeats span residues 136 to 163 (HLDL…KLCG), 185 to 210 (VKFA…TLCR), 234 to 260 (PNTM…TLSH), and 347 to 372 (FYED…VVGS). One can recognise an FBD domain in the interval 377 to 429 (MERTSIISGHRCLLSSLEYVEIETPLTGEVFEMKLVSYLLENSPILKKLTIHL).

This is Putative F-box/FBD/LRR-repeat protein At1g66300 from Arabidopsis thaliana (Mouse-ear cress).